Reading from the N-terminus, the 259-residue chain is Indole-3-glycerol phosphate synthase (259 aa).

Belongs to the TrpC family.

The enzyme catalyses 1-(2-carboxyphenylamino)-1-deoxy-D-ribulose 5-phosphate + H(+) = (1S,2R)-1-C-(indol-3-yl)glycerol 3-phosphate + CO2 + H2O. It functions in the pathway amino-acid biosynthesis; L-tryptophan biosynthesis; L-tryptophan from chorismate: step 4/5. This Dehalococcoides mccartyi (strain ATCC BAA-2100 / JCM 16839 / KCTC 5957 / BAV1) protein is Indole-3-glycerol phosphate synthase.